Reading from the N-terminus, the 685-residue chain is Stromal interaction molecule 1 (685 aa).

An N-terminal signal peptide occupies residues 1–22 (MDVCVRLALWLLWGLLLHQGQS). Residues 23–213 (LSHSHSEKAT…LLTRHNHLKD (191 aa)) are Extracellular-facing. EF-hand domains lie at 64–97 (SFEAVRNIHKLMDDDANGDVDVEESDEFLREDLN) and 102–126 (TVKHSTFHGEDKLISVEDLWKAWKS). 5 residues coordinate Ca(2+): Asp-76, Asp-78, Asn-80, Asp-82, and Glu-87. N-linked (GlcNAc...) asparagine glycans are attached at residues Asn-131 and Asn-171. The 69-residue stretch at 132–200 (WTVDEVVQWL…QLKALDTVLF (69 aa)) folds into the SAM domain. The helical transmembrane segment at 214 to 234 (FMLVVSIVIGVGGCWFAYIQN) threads the bilayer. Residues 235–685 (RYSKEHMKKM…LKIFKKPLKK (451 aa)) lie on the Cytoplasmic side of the membrane. Residues 248-442 (LEGLHRAEQS…IEILCGFQIV (195 aa)) adopt a coiled-coil conformation. Ser-257 carries the post-translational modification Phosphoserine. Residues 344–442 (PEALQKWLQL…IEILCGFQIV (99 aa)) form an SOAR/CAD region. The interval 475–483 (DDVDDMDEE) is contributes to fast Ca(2+)-dependent inactivation of CRAC channels. Positions 490–499 (MQSPSLQSSV) are enriched in low complexity. The interval 490–542 (MQSPSLQSSVRQRLTEPQHGLGSQRDLTHSDSESSLHMSDRQRVAPKPPQMSR) is disordered. The residue at position 504 (Thr-504) is a Phosphothreonine. The residue at position 512 (Ser-512) is a Phosphoserine. A compositionally biased stretch (basic and acidic residues) spans 515–532 (DLTHSDSESSLHMSDRQR). Thr-517 is subject to Phosphothreonine. Ser-519, Ser-521, Ser-523, Ser-524, Ser-567, Ser-575, Ser-602, Ser-608, Ser-618, Ser-621, and Ser-628 each carry phosphoserine. The disordered stretch occupies residues 596 to 685 (LMELSPSAPP…LKIFKKPLKK (90 aa)). Residues 608–620 (SPHLDSSRSHSPS) are compositionally biased toward low complexity. A Microtubule tip localization signal motif is present at residues 642–645 (TRIP). Positions 655 to 666 (EEDNGSIGEETD) are enriched in acidic residues. Residue Ser-660 is modified to Phosphoserine. Thr-665 is modified (phosphothreonine). A Phosphoserine modification is found at Ser-668. Positions 670-685 (GRKKFPLKIFKKPLKK) are enriched in basic residues. Positions 672–685 (KKFPLKIFKKPLKK) are required for generation of inwardly rectifying CRAC currents.

Monomer in the presence of Ca(2+); it oligomerizes in absence of Ca(2+). Forms homooligomers and heterooligomers with STIM2. Interacts with pore-forming subunits of CRAC channels, ORAI1, ORAI2 and ORAI3; this interaction is potentiated upon Ca(2+) store depletion. Interacts (via the transmembrane region and the SOAR/CAD domain) with SPPL3; the interaction promotes the binding of STIM1 to ORAI1. Interacts (via the SOAR/CAD domain) with ORAI1. Interacts with MAPRE1; probably required for targeting to the growing microtubule plus ends. Interacts with CRACR2A/EFCAB4B; the interaction is direct and takes place in absence of Ca(2+). Forms a complex with CRACR2A/EFCAB4B and ORAI1 at low concentration of Ca(2+), the complex dissociates at elevated Ca(2+) concentrations. Interacts with SARAF, promoting a slow inactivation of STIM1-dependent SOCE activity, possibly by facilitating the deoligomerization of STIM1. Interacts with EFHB; the interaction takes place upon Ca(2+)-store depletion and inhibits the association with SARAF. Interacts with ASPH (isoform 8). Interacts with SLC35G1; intracellular Ca(2+)-dependent. May interact with ATP1A1, ATP2A2, ATP2B1, ATP2B4, KPNB1 and XPO1; through SLC35G1. Interacts with TMEM203. Interacts with STIMATE, promoting STIM1 conformational switch. Interacts with TMEM178A. Interacts with CASQ1 (via C-terminal end and preferentially with the monomeric form); this interaction increases in response to a depletion of intracellular Ca(2+), decreases both STIM1 aggregation and clustering, interaction of STIM1 with ORAI1 and store-operated Ca(2+) entry (SOCE) activity. Interacts with ADCY8. Glycosylation is required for cell surface expression. Post-translationally, phosphorylated predominantly on Ser residues. As to expression, ubiquitously expressed in various human primary cells and tumor cell lines.

Its subcellular location is the cell membrane. It is found in the endoplasmic reticulum membrane. The protein resides in the cytoplasm. It localises to the cytoskeleton. The protein localises to the sarcoplasmic reticulum. Functionally, acts as a Ca(2+) sensor that gates two major inward rectifying Ca(2+) channels at the plasma membrane: Ca(2+) release-activated Ca(2+) (CRAC) channels and arachidonate-regulated Ca(2+)-selective (ARC) channels. Plays a role in mediating store-operated Ca(2+) entry (SOCE), a Ca(2+) influx following depletion of intracellular Ca(2+) stores. Upon Ca(2+) depletion, translocates from the endoplasmic reticulum to the plasma membrane where it activates CRAC channel pore-forming subunits ORA1, ORA2 and ORAI3 to generate sustained and oscillatory Ca(2+) entry. Involved in enamel formation. The polypeptide is Stromal interaction molecule 1 (STIM1) (Homo sapiens (Human)).